The sequence spans 97 residues: Small ribosomal subunit protein bS20 (97 aa).

The interval 1–22 is disordered; it reads MANSKSALKRIRTSERNRLRNK.

The protein belongs to the bacterial ribosomal protein bS20 family.

Functionally, binds directly to 16S ribosomal RNA. The chain is Small ribosomal subunit protein bS20 from Crocosphaera subtropica (strain ATCC 51142 / BH68) (Cyanothece sp. (strain ATCC 51142)).